A 427-amino-acid polypeptide reads, in one-letter code: Trigger factor (427 aa).

A PPIase FKBP-type domain is found at 163-248 (GDIAVIDFKG…IKSIKVKELP (86 aa)).

Belongs to the FKBP-type PPIase family. Tig subfamily.

The protein localises to the cytoplasm. It carries out the reaction [protein]-peptidylproline (omega=180) = [protein]-peptidylproline (omega=0). In terms of biological role, involved in protein export. Acts as a chaperone by maintaining the newly synthesized protein in an open conformation. Functions as a peptidyl-prolyl cis-trans isomerase. This is Trigger factor from Clostridium beijerinckii (strain ATCC 51743 / NCIMB 8052) (Clostridium acetobutylicum).